The following is a 186-amino-acid chain: Putative thiamine-phosphate synthase 2 (186 aa).

Residues 35–39 (QLREK) and asparagine 67 contribute to the 4-amino-2-methyl-5-(diphosphooxymethyl)pyrimidine site. Glutamate 68 is a binding site for Mg(2+). A 4-amino-2-methyl-5-(diphosphooxymethyl)pyrimidine-binding site is contributed by serine 105. A 2-[(2R,5Z)-2-carboxy-4-methylthiazol-5(2H)-ylidene]ethyl phosphate-binding site is contributed by 131–133 (TSS). Residue histidine 134 coordinates 4-amino-2-methyl-5-(diphosphooxymethyl)pyrimidine. 2-[(2R,5Z)-2-carboxy-4-methylthiazol-5(2H)-ylidene]ethyl phosphate is bound by residues glycine 161 and 181-182 (IS).

The protein belongs to the thiamine-phosphate synthase family. It depends on Mg(2+) as a cofactor.

The enzyme catalyses 2-[(2R,5Z)-2-carboxy-4-methylthiazol-5(2H)-ylidene]ethyl phosphate + 4-amino-2-methyl-5-(diphosphooxymethyl)pyrimidine + 2 H(+) = thiamine phosphate + CO2 + diphosphate. It catalyses the reaction 2-(2-carboxy-4-methylthiazol-5-yl)ethyl phosphate + 4-amino-2-methyl-5-(diphosphooxymethyl)pyrimidine + 2 H(+) = thiamine phosphate + CO2 + diphosphate. It carries out the reaction 4-methyl-5-(2-phosphooxyethyl)-thiazole + 4-amino-2-methyl-5-(diphosphooxymethyl)pyrimidine + H(+) = thiamine phosphate + diphosphate. It functions in the pathway cofactor biosynthesis; thiamine diphosphate biosynthesis; thiamine phosphate from 4-amino-2-methyl-5-diphosphomethylpyrimidine and 4-methyl-5-(2-phosphoethyl)-thiazole: step 1/1. Functionally, condenses 4-methyl-5-(beta-hydroxyethyl)thiazole monophosphate (THZ-P) and 2-methyl-4-amino-5-hydroxymethyl pyrimidine pyrophosphate (HMP-PP) to form thiamine monophosphate (TMP). The chain is Putative thiamine-phosphate synthase 2 (thiE2) from Aquifex aeolicus (strain VF5).